The following is a 246-amino-acid chain: Acetoacetate decarboxylase (246 aa).

Residue Lys116 is the Schiff-base intermediate with acetoacetate of the active site.

The protein belongs to the ADC family.

It carries out the reaction acetoacetate + H(+) = acetone + CO2. Functionally, catalyzes the conversion of acetoacetate to acetone and carbon dioxide. This chain is Acetoacetate decarboxylase, found in Burkholderia mallei (strain NCTC 10247).